The following is a 296-amino-acid chain: Myeloid differentiation primary response protein MyD88 (296 aa).

The Death domain occupies 54-109; it reads MGFEYLEIRELETRPDPTRSLLDAWQGRSGASVGRLLELLALLDREDILKELKSRI. The tract at residues 110-155 is intermediate domain; it reads EEDCQKYLGKQQNQESEKPLQVARVESSVPQTKELGGITTLDDPLG. The TIR domain maps to 159–293; it reads ELFDAFICYC…WFWTRLAKAL (135 aa). At Ser244 the chain carries Phosphoserine.

In terms of assembly, homodimer. Also forms heterodimers with TIRAP. Binds to TLR2, TLR4, IRAK1, IRAK2 and IRAK4 via their respective TIR domains. Interacts with IL18R1. Interacts with BMX, IL1RL1, IKBKE and IRF7. Interacts with LRRFIP1 and LRRFIP2; this interaction positively regulates Toll-like receptor (TLR) signaling in response to agonist. Interacts with FLII. LRRFIP1 and LRRFIP2 compete with FLII for MYD88-binding. Interacts with IRF1. Upon IL1B treatment, forms a complex with PELI1, IRAK1, IRAK4 and TRAF6; this complex recruits MAP3K7/TAK1, TAB1 and TAB2 to mediate NF-kappa-B activation. Direct binding of SMAD6 to PELI1 prevents the complex formation and hence negatively regulates IL1R-TLR signaling and eventually NF-kappa-B-mediated gene expression. May interact with PIK3AP1. Interacts (via TIR domain) with DHX9 (via H2A and OB-fold regions); this interaction is direct. Interacts with OTUD4 deubiquitinase; the interaction is direct. In terms of processing, ubiquitinated; undergoes 'Lys-63'-linked polyubiquitination. OTUD4 specifically hydrolyzes 'Lys-63'-linked polyubiquitinated MYD88. Deubiquitinated by USP3 that cleaves 'Lys-63'-linked ubiquitin chains leading to inhibition of MYD88-induced NF-kappa-B signaling. As to expression, detected in bone marrow. Isoform 1 is expressed in testis, kidney, lung, ovary, adrenal gland, provstate, thymus and heart, and weakly in skeletal muscle, liver, spleen and brain. Isoform 2 is mainly expressed in the spleen and weakly in brain.

The protein localises to the cytoplasm. Its subcellular location is the nucleus. In terms of biological role, adapter protein involved in the Toll-like receptor and IL-1 receptor signaling pathway in the innate immune response. Acts via IRAK1, IRAK2, IRF7 and TRAF6, leading to NF-kappa-B activation, cytokine secretion and the inflammatory response. Increases IL-8 transcription. Involved in IL-18-mediated signaling pathway. Activates IRF1 resulting in its rapid migration into the nucleus to mediate an efficient induction of IFN-beta, NOS2/INOS, and IL12A genes. Upon TLR8 activation by GU-rich single-stranded RNA (GU-rich RNA) derived from viruses, induces IL1B release through NLRP3 inflammasome activation. MyD88-mediated signaling in intestinal epithelial cells is crucial for maintenance of gut homeostasis and controls the expression of the antimicrobial lectin REG3G in the small intestine. Mediates leukocyte recruitment at the inflammatory site. Functionally, defective in its ability to induce IRAK phosphorylation and NF-kappa-B activation and can function as a negative regulator of activation by IL-1 or lipopolysaccharide (LPS). In Mus musculus (Mouse), this protein is Myeloid differentiation primary response protein MyD88.